We begin with the raw amino-acid sequence, 1131 residues long: DNA-directed RNA polymerase subunit beta (1131 aa).

Positions 1108-1131 are disordered; the sequence is QLARRTPPRPTYESLSRESLDDDE. Residues 1122-1131 show a composition bias toward basic and acidic residues; sequence LSRESLDDDE.

The protein belongs to the RNA polymerase beta chain family. As to quaternary structure, in cyanobacteria the RNAP catalytic core is composed of 2 alpha, 1 beta, 1 beta', 1 gamma and 1 omega subunit. When a sigma factor is associated with the core the holoenzyme is formed, which can initiate transcription.

The enzyme catalyses RNA(n) + a ribonucleoside 5'-triphosphate = RNA(n+1) + diphosphate. Its function is as follows. DNA-dependent RNA polymerase catalyzes the transcription of DNA into RNA using the four ribonucleoside triphosphates as substrates. The chain is DNA-directed RNA polymerase subunit beta from Nostoc sp. (strain PCC 7120 / SAG 25.82 / UTEX 2576).